Reading from the N-terminus, the 125-residue chain is Probable 4-amino-4-deoxy-L-arabinose-phosphoundecaprenol flippase subunit ArnF (125 aa).

At 1–2 (MG) the chain is on the cytoplasmic side. The helical transmembrane segment at 3-23 (VMWGLISVAIASLAQLSLGFA) threads the bilayer. The Periplasmic segment spans residues 24 to 33 (MMRLPSIAHP). The chain crosses the membrane as a helical span at residues 34–54 (LAFISGLGAFNAATLALFAGL). The Cytoplasmic portion of the chain corresponds to 55–76 (AGYLVSVFCWQKTLHTLALSKA). A helical membrane pass occupies residues 77–97 (YALLSLSYVLVWVASMLLPGL). The Periplasmic portion of the chain corresponds to 98–100 (QGA). A helical membrane pass occupies residues 101 to 121 (FSLKAMLGVLCIMAGVMLIFL). Topologically, residues 122–125 (PARS) are cytoplasmic.

It belongs to the ArnF family. Heterodimer of ArnE and ArnF.

The protein localises to the cell inner membrane. It participates in bacterial outer membrane biogenesis; lipopolysaccharide biosynthesis. Functionally, translocates 4-amino-4-deoxy-L-arabinose-phosphoundecaprenol (alpha-L-Ara4N-phosphoundecaprenol) from the cytoplasmic to the periplasmic side of the inner membrane. The protein is Probable 4-amino-4-deoxy-L-arabinose-phosphoundecaprenol flippase subunit ArnF of Salmonella choleraesuis (strain SC-B67).